The following is a 123-amino-acid chain: Ribosome-binding factor A (123 aa).

Belongs to the RbfA family. In terms of assembly, monomer. Binds 30S ribosomal subunits, but not 50S ribosomal subunits or 70S ribosomes.

Its subcellular location is the cytoplasm. In terms of biological role, one of several proteins that assist in the late maturation steps of the functional core of the 30S ribosomal subunit. Associates with free 30S ribosomal subunits (but not with 30S subunits that are part of 70S ribosomes or polysomes). Required for efficient processing of 16S rRNA. May interact with the 5'-terminal helix region of 16S rRNA. In Chlamydia trachomatis serovar A (strain ATCC VR-571B / DSM 19440 / HAR-13), this protein is Ribosome-binding factor A.